Reading from the N-terminus, the 183-residue chain is NADH-quinone oxidoreductase subunit A (183 aa).

The next 3 helical transmembrane spans lie at Ile-11–Leu-31, Phe-63–Trp-83, and Val-98–Leu-118. Residues Thr-159–Glu-183 form a disordered region.

Belongs to the complex I subunit 3 family. As to quaternary structure, NDH-1 is composed of 14 different subunits. Subunits NuoA, H, J, K, L, M, N constitute the membrane sector of the complex.

It localises to the cell inner membrane. It carries out the reaction a quinone + NADH + 5 H(+)(in) = a quinol + NAD(+) + 4 H(+)(out). NDH-1 shuttles electrons from NADH, via FMN and iron-sulfur (Fe-S) centers, to quinones in the respiratory chain. The immediate electron acceptor for the enzyme in this species is believed to be ubiquinone. Couples the redox reaction to proton translocation (for every two electrons transferred, four hydrogen ions are translocated across the cytoplasmic membrane), and thus conserves the redox energy in a proton gradient. In Acinetobacter baumannii (strain ACICU), this protein is NADH-quinone oxidoreductase subunit A.